A 329-amino-acid polypeptide reads, in one-letter code: tRNA (guanine(10)-N2)-dimethyltransferase (329 aa).

The THUMP domain maps to 40–143; the sequence is NVENVEIFER…KLWIGIRIRE (104 aa).

The protein belongs to the methyltransferase superfamily. Trm-G10 family. Monomer.

It localises to the cytoplasm. The enzyme catalyses guanosine(10) in tRNA + 2 S-adenosyl-L-methionine = N(2)-dimethylguanosine(10) in tRNA + 2 S-adenosyl-L-homocysteine + 2 H(+). Catalyzes the adenosylmethionine-dependent methylation of the exocyclic amino group (N(2)) of guanosine at position 10 of various tRNAs. Acts via a two-step process that leads to the formation of either N(2)-monomethyl (m(2)G) or N(2)-dimethylguanosine (m(2)(2)G). In Pyrococcus abyssi (strain GE5 / Orsay), this protein is tRNA (guanine(10)-N2)-dimethyltransferase (trmG10).